The following is a 250-amino-acid chain: Pre-protein VI (250 aa).

Residues 1–33 (MEDINFASLAPRHGSRPFMGNWQDIGTSNMSGG) constitute a propeptide that is removed on maturation. The tract at residues 34 to 54 (AFSWGSLWSGIKNFGSTIKNY) is amphipathic alpha-helix essential for membrane lytic activity. The tract at residues 36–53 (SWGSLWSGIKNFGSTIKN) is involved in endosomal membrane lysis. The tract at residues 48 to 74 (GSTIKNYGSKAWNSSTGQMLRDKLKEQ) is interaction with hexon protein. A Nuclear export signal motif is present at residues 67–76 (LRDKLKEQNF). The segment at 103-147 (INSKLDPRPPVEEPPPAVETVSPEGRGEKRPRPDREETLVTQIDE) is disordered. The residue at position 124 (Ser-124) is a Phosphoserine; by host. A compositionally biased stretch (basic and acidic residues) spans 127–140 (GRGEKRPRPDREET). A Nuclear localization signal motif is present at residues 131–135 (KRPRP). Position 143 is a phosphothreonine; by host (Thr-143). A PPXY motif motif is present at residues 148–151 (PPSY). Residues 206-220 (PSRASLRRAASGPRS) are compositionally biased toward low complexity. The tract at residues 206–226 (PSRASLRRAASGPRSMRPVAS) is disordered. A Nuclear export signal motif is present at residues 231–242 (STLNSIVGLGVQ). The interaction with hexon protein stretch occupies residues 233-239 (LNSIVGL). A binds to importin alpha/beta, involved in hexon nuclear import region spans residues 240 to 250 (GVQSLKRRRCF). The short motif at 245 to 248 (KRRR) is the Nuclear localization signal element.

Belongs to the adenoviridae protein VI family. In terms of assembly, interacts with hexon protein; this interaction allows nuclear import of hexon trimers and possibly pre-capsid assembly. Interacts (via C-terminal NLS) with importin alpha/beta. As to quaternary structure, interacts (via PPxY motif) with host NEDD4 ubiquitine ligase; this interaction might play a role in virus intracellular transport during entry. Part of a complex composed of the core-capsid bridging protein, the endosome lysis protein VI and the hexon-linking protein VIII; these interactions bridge the virus core to the capsid. Interacts with peripentonal hexons; this interaction stabilizes the capsid by gluing two peripentonal hexons together and joining them with an adjacent group-of-nine hexon. Heterodimer with the viral protease; disulfide-linked. Interacts with the viral protease. Post-translationally, ubiquitinated by Nedd4 following partial capsid disassembly; which might play a role in intracellular virus movement during entry. Contains the major nuclear import and export signals. Proteolytically removed during virion maturation. The processing of the C-terminus turns the precursor into a mature viral structural protein and abrogates its ability to promote hexon import and act as a potential chaperone protein.

It localises to the host nucleus. Its subcellular location is the host cytoplasm. The protein resides in the virion. Functionally, during virus assembly, promotes hexon trimers nuclear import through nuclear pore complexes via an importin alpha/beta-dependent mechanism. By analogy to herpesviruses capsid assembly, might act as a chaperone to promote the formation of the icosahedral capsid. Its function is as follows. Structural component of the virion that provides increased stability to the particle shell through its interaction with the core-capsid bridging protein and the hexon-linking protein VIII. Fibers shedding during virus entry into host cell allows the endosome lysis protein to be exposed as a membrane-lytic peptide. Exhibits pH-independent membrane fragmentation activity and probably mediates viral rapid escape from host endosome via organellar membrane lysis. It is not clear if it then remains partially associated with the capsid and involved in the intracellular microtubule-dependent transport of capsid to the nucleus, or if it is lost during endosomal penetration. In terms of biological role, cofactor that activates the viral protease. Binds to viral protease in a 1:1 ratio. The protein is Pre-protein VI of Human adenovirus C serotype 2 (HAdV-2).